The primary structure comprises 340 residues: DNA-directed RNA polymerase subunit alpha (340 aa).

Residues 1 to 237 (MSSDELVYMN…EQMNPFINFD (237 aa)) are alpha N-terminal domain (alpha-NTD). Positions 256-340 (FNENLYRSVD…PEEDQIKEGE (85 aa)) are alpha C-terminal domain (alpha-CTD).

The protein belongs to the RNA polymerase alpha chain family. In terms of assembly, homodimer. The RNAP catalytic core consists of 2 alpha, 1 beta, 1 beta' and 1 omega subunit. When a sigma factor is associated with the core the holoenzyme is formed, which can initiate transcription.

The catalysed reaction is RNA(n) + a ribonucleoside 5'-triphosphate = RNA(n+1) + diphosphate. Its function is as follows. DNA-dependent RNA polymerase catalyzes the transcription of DNA into RNA using the four ribonucleoside triphosphates as substrates. The protein is DNA-directed RNA polymerase subunit alpha of Desulforapulum autotrophicum (strain ATCC 43914 / DSM 3382 / VKM B-1955 / HRM2) (Desulfobacterium autotrophicum).